The primary structure comprises 73 residues: Large ribosomal subunit protein bL31 (73 aa).

It belongs to the bacterial ribosomal protein bL31 family. Type A subfamily. In terms of assembly, part of the 50S ribosomal subunit.

Functionally, binds the 23S rRNA. The chain is Large ribosomal subunit protein bL31 from Cereibacter sphaeroides (strain ATCC 17025 / ATH 2.4.3) (Rhodobacter sphaeroides).